The chain runs to 1057 residues: Carbamoyl phosphate synthase large chain (1057 aa).

The tract at residues 1–401 (MPKRNDIKTI…SLLKAIRSLE (401 aa)) is carboxyphosphate synthetic domain. The ATP site is built by arginine 129, arginine 169, glycine 175, glycine 176, lysine 208, isoleucine 210, glutamate 215, glycine 241, isoleucine 242, histidine 243, glutamine 284, and glutamate 298. Positions 133–327 (RTLMNDLNVP…IAKLAAKIAV (195 aa)) constitute an ATP-grasp 1 domain. Mg(2+) contacts are provided by glutamine 284, glutamate 298, and asparagine 300. Residues glutamine 284, glutamate 298, and asparagine 300 each contribute to the Mn(2+) site. The segment at 402-546 (YGVHHLGLPN…YGTYETENES (145 aa)) is oligomerization domain. Residues 547–929 (IVTDKEKILV…ALFKGLTGSG (383 aa)) are carbamoyl phosphate synthetic domain. Positions 671–861 (EALLRKINVP…MAQLAMRAII (191 aa)) constitute an ATP-grasp 2 domain. ATP contacts are provided by arginine 707, arginine 746, leucine 748, glutamate 752, glycine 777, valine 778, histidine 779, serine 780, glutamine 820, and glutamate 832. Mg(2+)-binding residues include glutamine 820, glutamate 832, and asparagine 834. Residues glutamine 820, glutamate 832, and asparagine 834 each contribute to the Mn(2+) site. In terms of domain architecture, MGS-like spans 930-1057 (VEVKDHGTVL…ESMTFTMRQM (128 aa)). The tract at residues 930 to 1057 (VEVKDHGTVL…ESMTFTMRQM (128 aa)) is allosteric domain.

This sequence belongs to the CarB family. Composed of two chains; the small (or glutamine) chain promotes the hydrolysis of glutamine to ammonia, which is used by the large (or ammonia) chain to synthesize carbamoyl phosphate. Tetramer of heterodimers (alpha,beta)4. Mg(2+) serves as cofactor. The cofactor is Mn(2+).

The enzyme catalyses hydrogencarbonate + L-glutamine + 2 ATP + H2O = carbamoyl phosphate + L-glutamate + 2 ADP + phosphate + 2 H(+). The catalysed reaction is hydrogencarbonate + NH4(+) + 2 ATP = carbamoyl phosphate + 2 ADP + phosphate + 2 H(+). It functions in the pathway amino-acid biosynthesis; L-arginine biosynthesis; carbamoyl phosphate from bicarbonate: step 1/1. Its pathway is pyrimidine metabolism; UMP biosynthesis via de novo pathway; (S)-dihydroorotate from bicarbonate: step 1/3. Functionally, large subunit of the glutamine-dependent carbamoyl phosphate synthetase (CPSase). CPSase catalyzes the formation of carbamoyl phosphate from the ammonia moiety of glutamine, carbonate, and phosphate donated by ATP, constituting the first step of 2 biosynthetic pathways, one leading to arginine and/or urea and the other to pyrimidine nucleotides. The large subunit (synthetase) binds the substrates ammonia (free or transferred from glutamine from the small subunit), hydrogencarbonate and ATP and carries out an ATP-coupled ligase reaction, activating hydrogencarbonate by forming carboxy phosphate which reacts with ammonia to form carbamoyl phosphate. The chain is Carbamoyl phosphate synthase large chain from Staphylococcus aureus (strain MW2).